The sequence spans 307 residues: Recombination-associated protein RdgC (307 aa).

Belongs to the RdgC family.

The protein resides in the cytoplasm. Its subcellular location is the nucleoid. May be involved in recombination. The sequence is that of Recombination-associated protein RdgC from Burkholderia cenocepacia (strain ATCC BAA-245 / DSM 16553 / LMG 16656 / NCTC 13227 / J2315 / CF5610) (Burkholderia cepacia (strain J2315)).